Consider the following 207-residue polypeptide: Small ribosomal subunit protein uS4 (207 aa).

The interval 31-51 is disordered; the sequence is KCKLDSKPGQHGRTSGARTSD. One can recognise an S4 RNA-binding domain in the interval 97-160; sequence SRLDNVVYRM…KKQARIRESL (64 aa).

The protein belongs to the universal ribosomal protein uS4 family. As to quaternary structure, part of the 30S ribosomal subunit. Contacts protein S5. The interaction surface between S4 and S5 is involved in control of translational fidelity.

One of the primary rRNA binding proteins, it binds directly to 16S rRNA where it nucleates assembly of the body of the 30S subunit. Its function is as follows. With S5 and S12 plays an important role in translational accuracy. The sequence is that of Small ribosomal subunit protein uS4 from Bordetella avium (strain 197N).